Reading from the N-terminus, the 412-residue chain is Short-chain specific acyl-CoA dehydrogenase, mitochondrial (412 aa).

Residues 1 to 24 (MAAALLARASGPARRALCPRAWRQ) constitute a mitochondrion transit peptide. Thr27 bears the Phosphothreonine mark. Lys51 is subject to N6-acetyllysine; alternate. Position 51 is an N6-succinyllysine; alternate (Lys51). Lys72 carries the N6-acetyllysine modification. N6-acetyllysine; alternate is present on Lys129. Residue Lys129 is modified to N6-succinyllysine; alternate. FAD-binding positions include 152–161 (FALSEPGNGS) and 185–187 (WIT). Ser161 is a substrate binding site. Lys208 is subject to N6-acetyllysine. Position 262 is an N6-acetyllysine; alternate (Lys262). Lys262 is modified (N6-succinyllysine; alternate). 269–272 (DMGR) contacts substrate. Arg297 contributes to the FAD binding site. Lys306 is subject to N6-acetyllysine; alternate. At Lys306 the chain carries N6-succinyllysine; alternate. Residues Gln308 and 365–369 (QILGG) each bind FAD. Glu392 acts as the Proton acceptor in catalysis. Gly393 serves as a coordination point for substrate. Residue 394 to 396 (TSE) participates in FAD binding.

This sequence belongs to the acyl-CoA dehydrogenase family. Homotetramer. It depends on FAD as a cofactor.

It localises to the mitochondrion matrix. The catalysed reaction is a short-chain 2,3-saturated fatty acyl-CoA + oxidized [electron-transfer flavoprotein] + H(+) = a short-chain (2E)-enoyl-CoA + reduced [electron-transfer flavoprotein]. It carries out the reaction butanoyl-CoA + oxidized [electron-transfer flavoprotein] + H(+) = (2E)-butenoyl-CoA + reduced [electron-transfer flavoprotein]. The enzyme catalyses pentanoyl-CoA + oxidized [electron-transfer flavoprotein] + H(+) = (2E)-pentenoyl-CoA + reduced [electron-transfer flavoprotein]. It catalyses the reaction hexanoyl-CoA + oxidized [electron-transfer flavoprotein] + H(+) = (2E)-hexenoyl-CoA + reduced [electron-transfer flavoprotein]. The protein operates within lipid metabolism; mitochondrial fatty acid beta-oxidation. Its function is as follows. Short-chain specific acyl-CoA dehydrogenase is one of the acyl-CoA dehydrogenases that catalyze the first step of mitochondrial fatty acid beta-oxidation, an aerobic process breaking down fatty acids into acetyl-CoA and allowing the production of energy from fats. The first step of fatty acid beta-oxidation consists in the removal of one hydrogen from C-2 and C-3 of the straight-chain fatty acyl-CoA thioester, resulting in the formation of trans-2-enoyl-CoA. Among the different mitochondrial acyl-CoA dehydrogenases, short-chain specific acyl-CoA dehydrogenase acts specifically on acyl-CoAs with saturated 4 to 6 carbons long primary chains. This is Short-chain specific acyl-CoA dehydrogenase, mitochondrial (ACADS) from Homo sapiens (Human).